The following is a 122-amino-acid chain: Large ribosomal subunit protein uL14 (122 aa).

It belongs to the universal ribosomal protein uL14 family. Part of the 50S ribosomal subunit. Forms a cluster with proteins L3 and L19. In the 70S ribosome, L14 and L19 interact and together make contacts with the 16S rRNA in bridges B5 and B8.

Functionally, binds to 23S rRNA. Forms part of two intersubunit bridges in the 70S ribosome. The chain is Large ribosomal subunit protein uL14 from Salinibacter ruber (strain DSM 13855 / M31).